Reading from the N-terminus, the 201-residue chain is Large ribosomal subunit protein bL9 (201 aa).

The segment covering 150–165 has biased composition (basic and acidic residues); sequence EAERQAAGEDLTQRRD. A disordered region spans residues 150–201; sequence EAERQAAGEDLTQRRDDEEEEAVEAAEFFESEELAPGDEEEEAAGEEEDAKE. Acidic residues predominate over residues 166–201; sequence DEEEEAVEAAEFFESEELAPGDEEEEAAGEEEDAKE.

The protein belongs to the bacterial ribosomal protein bL9 family.

In terms of biological role, binds to the 23S rRNA. This is Large ribosomal subunit protein bL9 from Parvibaculum lavamentivorans (strain DS-1 / DSM 13023 / NCIMB 13966).